The following is a 301-amino-acid chain: Probable aspartoacylase (301 aa).

Zn(2+) is bound by residues His13 and Glu16. Substrate-binding positions include Arg54 and 61–62 (NR). Zn(2+) is bound at residue His105. Substrate is bound by residues Glu163 and Tyr273.

It belongs to the AspA/AstE family. Aspartoacylase subfamily. The cofactor is Zn(2+).

It carries out the reaction an N-acyl-L-aspartate + H2O = a carboxylate + L-aspartate. The protein is Probable aspartoacylase of Prochlorococcus marinus (strain MIT 9215).